Reading from the N-terminus, the 346-residue chain is Putative alpha/beta hydrolase R526 (346 aa).

It belongs to the AB hydrolase 3 family.

It is found in the virion. The sequence is that of Putative alpha/beta hydrolase R526 from Acanthamoeba polyphaga mimivirus (APMV).